Here is a 290-residue protein sequence, read N- to C-terminus: Probable endonuclease 4 (290 aa).

Residues histidine 69, histidine 109, glutamate 145, aspartate 179, histidine 182, histidine 216, aspartate 229, histidine 231, and glutamate 261 each contribute to the Zn(2+) site.

This sequence belongs to the AP endonuclease 2 family. The cofactor is Zn(2+).

It catalyses the reaction Endonucleolytic cleavage to 5'-phosphooligonucleotide end-products.. Endonuclease IV plays a role in DNA repair. It cleaves phosphodiester bonds at apurinic or apyrimidinic (AP) sites, generating a 3'-hydroxyl group and a 5'-terminal sugar phosphate. In Chlorobium limicola (strain DSM 245 / NBRC 103803 / 6330), this protein is Probable endonuclease 4.